A 513-amino-acid polypeptide reads, in one-letter code: Putative ribose/galactose/methyl galactoside import ATP-binding protein 3 (513 aa).

ABC transporter domains are found at residues 15–252 and 263–508; these read IELT…VGRQ and TSAN…TQRE. ATP is bound at residue 47–54; sequence GENGAGKS.

This sequence belongs to the ABC transporter superfamily. Carbohydrate importer 2 (CUT2) (TC 3.A.1.2) family.

Its subcellular location is the cell inner membrane. It carries out the reaction D-ribose(out) + ATP + H2O = D-ribose(in) + ADP + phosphate + H(+). The enzyme catalyses D-galactose(out) + ATP + H2O = D-galactose(in) + ADP + phosphate + H(+). Its function is as follows. Part of an ABC transporter complex involved in carbohydrate import. Could be involved in ribose, galactose and/or methyl galactoside import. Responsible for energy coupling to the transport system. In Burkholderia ambifaria (strain ATCC BAA-244 / DSM 16087 / CCUG 44356 / LMG 19182 / AMMD) (Burkholderia cepacia (strain AMMD)), this protein is Putative ribose/galactose/methyl galactoside import ATP-binding protein 3.